Here is an 88-residue protein sequence, read N- to C-terminus: UPF0297 protein YrzL (88 aa).

This sequence belongs to the UPF0297 family.

The polypeptide is UPF0297 protein YrzL (yrzL) (Bacillus subtilis (strain 168)).